A 92-amino-acid polypeptide reads, in one-letter code: UPF0223 protein SPy_1248/M5005_Spy0958 (92 aa).

It belongs to the UPF0223 family.

The sequence is that of UPF0223 protein SPy_1248/M5005_Spy0958 from Streptococcus pyogenes serotype M1.